A 320-amino-acid chain; its full sequence is Methionyl-tRNA formyltransferase (320 aa).

Residue 117–120 participates in (6S)-5,6,7,8-tetrahydrofolate binding; sequence SLLP.

Belongs to the Fmt family.

The catalysed reaction is L-methionyl-tRNA(fMet) + (6R)-10-formyltetrahydrofolate = N-formyl-L-methionyl-tRNA(fMet) + (6S)-5,6,7,8-tetrahydrofolate + H(+). Attaches a formyl group to the free amino group of methionyl-tRNA(fMet). The formyl group appears to play a dual role in the initiator identity of N-formylmethionyl-tRNA by promoting its recognition by IF2 and preventing the misappropriation of this tRNA by the elongation apparatus. In Bordetella petrii (strain ATCC BAA-461 / DSM 12804 / CCUG 43448), this protein is Methionyl-tRNA formyltransferase.